The chain runs to 393 residues: Formate-dependent phosphoribosylglycinamide formyltransferase (393 aa).

Residues 22–23 and glutamate 82 each bind N(1)-(5-phospho-beta-D-ribosyl)glycinamide; that span reads EL. ATP contacts are provided by residues arginine 114, lysine 155, 160 to 165, 195 to 198, and glutamate 203; these read SSGHGQ and EGFI. The region spanning 119 to 308 is the ATP-grasp domain; that stretch reads RLAAEELGLK…QFALHARAIL (190 aa). Residues glutamate 267 and glutamate 279 each coordinate Mg(2+). N(1)-(5-phospho-beta-D-ribosyl)glycinamide is bound by residues aspartate 286, lysine 356, and 363–364; that span reads RR.

Belongs to the PurK/PurT family. Homodimer.

It catalyses the reaction N(1)-(5-phospho-beta-D-ribosyl)glycinamide + formate + ATP = N(2)-formyl-N(1)-(5-phospho-beta-D-ribosyl)glycinamide + ADP + phosphate + H(+). It functions in the pathway purine metabolism; IMP biosynthesis via de novo pathway; N(2)-formyl-N(1)-(5-phospho-D-ribosyl)glycinamide from N(1)-(5-phospho-D-ribosyl)glycinamide (formate route): step 1/1. In terms of biological role, involved in the de novo purine biosynthesis. Catalyzes the transfer of formate to 5-phospho-ribosyl-glycinamide (GAR), producing 5-phospho-ribosyl-N-formylglycinamide (FGAR). Formate is provided by PurU via hydrolysis of 10-formyl-tetrahydrofolate. This is Formate-dependent phosphoribosylglycinamide formyltransferase from Actinobacillus pleuropneumoniae serotype 5b (strain L20).